A 459-amino-acid polypeptide reads, in one-letter code: NADH-ubiquinone oxidoreductase chain 4 (459 aa).

13 helical membrane-spanning segments follow: residues methionine 22 to phenylalanine 42, proline 60 to serine 80, leucine 94 to alanine 112, threonine 113 to isoleucine 133, alanine 145 to isoleucine 165, tryptophan 196 to leucine 216, proline 224 to methionine 244, methionine 257 to leucine 277, serine 284 to isoleucine 303, serine 308 to alanine 330, leucine 351 to proline 371, threonine 391 to phenylalanine 411, and isoleucine 435 to threonine 455.

Belongs to the complex I subunit 4 family. In terms of assembly, core subunit of respiratory chain NADH dehydrogenase (Complex I) which is composed of 45 different subunits.

The protein resides in the mitochondrion inner membrane. The enzyme catalyses a ubiquinone + NADH + 5 H(+)(in) = a ubiquinol + NAD(+) + 4 H(+)(out). Its function is as follows. Core subunit of the mitochondrial membrane respiratory chain NADH dehydrogenase (Complex I) which catalyzes electron transfer from NADH through the respiratory chain, using ubiquinone as an electron acceptor. Essential for the catalytic activity and assembly of complex I. The sequence is that of NADH-ubiquinone oxidoreductase chain 4 (MT-ND4) from Gorilla gorilla gorilla (Western lowland gorilla).